The primary structure comprises 557 residues: Aerobic glycerol-3-phosphate dehydrogenase (557 aa).

Residue 21 to 49 (DVVIIGGGITGAGIALDASQRGMKVALVE) coordinates FAD.

Belongs to the FAD-dependent glycerol-3-phosphate dehydrogenase family. The cofactor is FAD.

The protein resides in the cytoplasm. The catalysed reaction is a quinone + sn-glycerol 3-phosphate = dihydroxyacetone phosphate + a quinol. It participates in polyol metabolism; glycerol degradation via glycerol kinase pathway; glycerone phosphate from sn-glycerol 3-phosphate (aerobic route): step 1/1. The protein is Aerobic glycerol-3-phosphate dehydrogenase (glpD) of Staphylococcus haemolyticus (strain JCSC1435).